Reading from the N-terminus, the 96-residue chain is Protein Vpr (96 aa).

The tract at residues 1 to 42 (MEQAPEDQGPQREPYNEWALELLEELKQEAVRHFPRPWLHNL) is homooligomerization. Residues S79, S94, and S96 each carry the phosphoserine; by host modification.

It belongs to the HIV-1 VPR protein family. Homooligomer, may form homodimer. Interacts with p6-gag region of the Pr55 Gag precursor protein through a (Leu-X-X)4 motif near the C-terminus of the P6gag protein. Interacts with host UNG. May interact with host RAD23A/HHR23A. Interacts with host VPRBP/DCAF1, leading to hijack the CUL4A-RBX1-DDB1-DCAF1/VPRBP complex, mediating ubiquitination of host proteins such as TERT and ZGPAT and arrest of the cell cycle in G2 phase. Phosphorylated on several residues by host. These phosphorylations regulate VPR activity for the nuclear import of the HIV-1 pre-integration complex.

Its subcellular location is the virion. The protein resides in the host nucleus. It localises to the host extracellular space. Functionally, during virus replication, may deplete host UNG protein, and incude G2-M cell cycle arrest. Acts by targeting specific host proteins for degradation by the 26S proteasome, through association with the cellular CUL4A-DDB1 E3 ligase complex by direct interaction with host VPRPB/DCAF-1. Cell cycle arrest reportedly occurs within hours of infection and is not blocked by antiviral agents, suggesting that it is initiated by the VPR carried into the virion. Additionally, VPR induces apoptosis in a cell cycle dependent manner suggesting that these two effects are mechanistically linked. Detected in the serum and cerebrospinal fluid of AIDS patient, VPR may also induce cell death to bystander cells. Its function is as follows. During virus entry, plays a role in the transport of the viral pre-integration (PIC) complex to the host nucleus. This function is crucial for viral infection of non-dividing macrophages. May act directly at the nuclear pore complex, by binding nucleoporins phenylalanine-glycine (FG)-repeat regions. In Homo sapiens (Human), this protein is Protein Vpr.